Here is a 354-residue protein sequence, read N- to C-terminus: 3'-5' exonuclease (354 aa).

Residues 1–120 are disordered; sequence MERFLTKMPI…PSPEKEKPEK (120 aa). Composition is skewed to basic and acidic residues over residues 13–30 and 37–50; these read KANE…ETPK and KKDT…KENA. The span at 59-70 shows a compositional bias: basic residues; that stretch reads TKGRPGRPAAKR. The segment covering 71–91 has biased composition (basic and acidic residues); sequence KNLDTPDVKDEKIAMEEENPP. A phosphoserine mark is found at S104, S110, and S112. The region spanning 149–314 is the 3'-5' exonuclease domain; that stretch reads WVEKQKDDVV…GQVIYRELER (166 aa). Positions 163, 165, and 301 each coordinate Mg(2+).

The protein belongs to the WRNexo family.

The protein resides in the nucleus. Functionally, has exonuclease activity on both single-stranded and duplex templates bearing overhangs, but not blunt ended duplex DNA, and cleaves in a 3'-5' direction. Essential for the formation of DNA replication focal centers. Has an important role in maintaining genome stability. The polypeptide is 3'-5' exonuclease (Drosophila simulans (Fruit fly)).